The following is a 519-amino-acid chain: Pleckstrin homology domain-containing family A member 8 (519 aa).

A PH domain is found at 1-93 (MEGVLYKWTN…WLVALGSAKA (93 aa)). Thr-139 is modified (phosphothreonine). The residue at position 145 (Ser-145) is a Phosphoserine. Thr-153 bears the Phosphothreonine mark. The tract at residues 310–519 (TFFSTMNTSF…VHGLESDEVV (210 aa)) is glycolipid transfer protein homology domain.

As to quaternary structure, homodimer. Interacts with ARF1; the interaction together with phosphatidylinositol 4-phosphate binding is required for FAPP2 GlcCer transfer ability. In terms of tissue distribution, expressed in kidney cell lines.

It is found in the golgi apparatus. Its subcellular location is the trans-Golgi network membrane. The protein localises to the membrane. In terms of biological role, cargo transport protein that is required for apical transport from the Golgi complex. Transports AQP2 from the trans-Golgi network (TGN) to sites of AQP2 phosphorylation. Mediates the non-vesicular transport of glucosylceramide (GlcCer) from the trans-Golgi network (TGN) to the plasma membrane and plays a pivotal role in the synthesis of complex glycosphingolipids. Binding of both phosphatidylinositol 4-phosphate (PIP) and ARF1 are essential for the GlcCer transfer ability. Also required for primary cilium formation, possibly by being involved in the transport of raft lipids to the apical membrane, and for membrane tubulation. In Homo sapiens (Human), this protein is Pleckstrin homology domain-containing family A member 8 (PLEKHA8).